The following is a 1513-amino-acid chain: DNA topoisomerase 2-binding protein 1-A (1513 aa).

BRCT domains lie at 101–189 (VYNM…YSDV) and 194–283 (YLCP…MYKI). The segment at 289–308 (IKSVPDTSTPTGGNSKPNSR) is disordered. 3 consecutive BRCT domains span residues 354–444 (APDD…IYFH), 530–621 (ADTS…SNAL), and 629–726 (EGST…SYLV). The span at 789 to 799 (QHNKNPQTSGG) shows a compositional bias: polar residues. The interval 789-809 (QHNKNPQTSGGESKVLQREPS) is disordered. The short motif at 844–850 (PNQKNRT) is the Nuclear localization signal element. The BRCT 6 domain maps to 892-984 (DNSKLLINVV…KRVPEALYPH (93 aa)). 2 disordered regions span residues 1031-1053 (ETSDDQVKKAAGDGNPQNPSKDV) and 1086-1109 (SVGRAGFDNSPCTPEGARSTRNGR). Serine 1131 carries the post-translational modification Phosphoserine. BRCT domains follow at residues 1253 to 1344 (SKEE…DYEW) and 1383 to 1480 (IAEG…NYCL). The Nuclear localization signal signature appears at 1508 to 1511 (KRSR).

It belongs to the TOPBP1 family. In terms of assembly, interacts with cdc45. Interacts (via BRCT domains) with ticrr; interaction is cdk2-dependent. Interacts with atr in the presence of atrip. Interacts with recql4 (via N-terminus). Interacts with gmnc. Interacts with cip2a; forming the CIP2A-TOPBP1 complex. Phosphorylation at Ser-1131 is essential for phosphorylation of chek1, and thus for checkpoint regulation.

The protein resides in the nucleus. It is found in the chromosome. The protein localises to the cytoplasm. Its subcellular location is the cytoskeleton. It localises to the microtubule organizing center. The protein resides in the centrosome. It is found in the spindle pole. In terms of biological role, scaffold protein that acts as a key protein-protein adapter in DNA replication and DNA repair. Composed of multiple BRCT domains, which specifically recognize and bind phosphorylated proteins, bringing proteins together into functional combinations. Required for DNA replication initiation but not for the formation of pre-replicative complexes or the elongation stages. Necessary for the loading of replication factors onto chromatin, including gmnc, cdc45, DNA polymerases and components of the GINS complex such as ginsl/sld5. Plays a central role in DNA repair by bridging proteins and promoting recruitment of proteins to DNA damage sites. Involved in double-strand break (DSB) repair via homologous recombination in S-phase by promoting the exchange between the DNA replication factor A (RPA) complex and RAD51. Involved in microhomology-mediated end-joining (MMEJ) DNA repair by promoting recruitment of polymerase theta (POLQ) to DNA damage sites during mitosis. In response to DNA damage, triggers the recruitment of checkpoint signaling proteins on chromatin, which activate the chek1 signaling pathway and block S-phase progression. Increases the kinase activity of atr to numerous substrates, and is required for the phosphorylation of Rad1. Together with cip2a, plays an essential role in the response to genome instability generated by the presence of acentric chromosome fragments derived from shattered chromosomes within micronuclei. The CIP2A-TOPBP1 complex tethers chromosome fragments during mitosis to ensure clustered segregation of the fragments to a single daughter cell nucleus, facilitating re-ligation with limited chromosome scattering and loss. The sequence is that of DNA topoisomerase 2-binding protein 1-A (topbp1-A) from Xenopus laevis (African clawed frog).